The chain runs to 601 residues: Glutamine--tRNA ligase (601 aa).

Positions 76–86 (PEPNGYLHIGH) match the 'HIGH' region motif. ATP is bound by residues 77–79 (EPN) and 83–89 (HIGHAKS). L-glutamine is bound by residues aspartate 109 and tyrosine 253. Residues threonine 272, 301-302 (RL), and 309-311 (MSK) each bind ATP. The 'KMSKS' region motif lies at 308–312 (VMSKR).

Belongs to the class-I aminoacyl-tRNA synthetase family. Monomer.

Its subcellular location is the cytoplasm. It carries out the reaction tRNA(Gln) + L-glutamine + ATP = L-glutaminyl-tRNA(Gln) + AMP + diphosphate. The polypeptide is Glutamine--tRNA ligase (Rhodopirellula baltica (strain DSM 10527 / NCIMB 13988 / SH1)).